The following is an 885-amino-acid chain: Alanine--tRNA ligase (885 aa).

Zn(2+) is bound by residues H564, H568, C676, and H680.

Belongs to the class-II aminoacyl-tRNA synthetase family. Zn(2+) is required as a cofactor.

It localises to the cytoplasm. It catalyses the reaction tRNA(Ala) + L-alanine + ATP = L-alanyl-tRNA(Ala) + AMP + diphosphate. Its function is as follows. Catalyzes the attachment of alanine to tRNA(Ala) in a two-step reaction: alanine is first activated by ATP to form Ala-AMP and then transferred to the acceptor end of tRNA(Ala). Also edits incorrectly charged Ser-tRNA(Ala) and Gly-tRNA(Ala) via its editing domain. This Brucella abortus (strain 2308) protein is Alanine--tRNA ligase.